Consider the following 90-residue polypeptide: uncharacterized protein (90 aa).

A helical transmembrane segment spans residues 15–34; the sequence is HVLAISTFIATAAVASYFTT. Residues 34-65 are disordered; the sequence is TKPKTKNEGKNSSALSQQKSGESSNSDAMGKD. Polar residues predominate over residues 43–60; the sequence is KNSSALSQQKSGESSNSD. Residue Asn-44 is glycosylated (N-linked (GlcNAc...) asparagine).

It localises to the mitochondrion membrane. This is an uncharacterized protein from Saccharomyces cerevisiae (strain ATCC 204508 / S288c) (Baker's yeast).